Reading from the N-terminus, the 274-residue chain is Oxidoreductase stcQ (274 aa).

The protein belongs to the avfA family.

The protein operates within mycotoxin biosynthesis; sterigmatocystin biosynthesis. Functionally, oxidoreductase; part of the gene cluster that mediates the biosynthesis of sterigmatocystin (ST), a polyketide-derived furanocoumarin which is part of the most toxic and carcinogenic compounds among the known mycotoxins. The first step in the biosynthesis of sterigmatocystin is the production of hexanoate by the fatty acid synthase (FAS) units stcJ and stcK. The polyketide backbone is assembled by the non-reducing polyketide synthase stcA by condensation of the starter hexanoyl-CoA and 7 malonyl-CoA extender units followed by cyclization and release of norsolorinic acid. Norsolorinic acid is the first stable intermediate in the biosynthesis of sterigmatocystin and is converted into averantin (AVN) by the ketoreductase stcE which reduces the hexanoate ketone to an alcohol. Averantin is then oxidized into 5'-hydroxyaverantin (HAVN) by the cytochrome P450 monooxygenase stcF. 5'-hydroxyaverantin is further converted to 5'-oxyaverantin (OAVN) by the 5'-hydroxyaverantin dehydrogenase stcG. The next step is the conversion of OAVN into averufin (AVF) which is catalyzed by a yet to be identified enzyme. The cytochrome P450 monooxygenase stcB and the flavin-binding monooxygenase stcW are both required for the conversion of averufin to 1-hydroxyversicolorone. The esterase stcI probably catalyzes the formation of versiconal hemiacetal acetate from 1-hydroxyversicolorone. The oxydoreductase stcN then probably catalyzes the biosynthetic step from versiconal to versicolorin B (VERB). The next step is performed by the versicolorin B desaturase stcL to produce versicolorin A (VERA). The ketoreductase stcU and the cytochrome P450 monooxygenase stcS are involved in the conversion of versicolorin A to demethylsterigmatocystin. The Baeyer-Villiger oxidas stcQ and the reductase stcR might be involved in the biosynthetic step from versicolorin A to demethylsterigmatocystin. The final step in the biosynthesis of sterigmatocystin is the methylation of demethylsterigmatocystin catalyzed by the methyltransferase stcP. This is Oxidoreductase stcQ from Emericella nidulans (strain FGSC A4 / ATCC 38163 / CBS 112.46 / NRRL 194 / M139) (Aspergillus nidulans).